The primary structure comprises 592 residues: Laccase PFICI_06862 (592 aa).

A signal peptide spans 1-19 (MYIQTQFASLLLLAGTSLA). An N-linked (GlcNAc...) asparagine glycan is attached at asparagine 26. Plastocyanin-like domains lie at 32–142 (QWSS…WIAP) and 173–350 (VVIS…RYPG). 4 residues coordinate Cu cation: histidine 78, histidine 80, histidine 123, and histidine 125. N-linked (GlcNAc...) asparagine glycans are attached at residues asparagine 370, asparagine 407, and asparagine 454. One can recognise a Plastocyanin-like 3 domain in the interval 445–563 (SDVQGGSMQN…AGQQVVLLEG (119 aa)). Residue histidine 475 coordinates Cu cation. N-linked (GlcNAc...) asparagine glycosylation occurs at asparagine 524.

Belongs to the multicopper oxidase family.

The protein resides in the cell surface. The protein operates within pigment biosynthesis; melanin biosynthesis. Laccase involved the biosynthesis of dihydroxynaphthalene (DHN)-melanin, a bluish-green pigment forming a dark layer in the conidial wall that protects the conidia from UV radiations. The first step of the pathway is the production of the pentaketide 1,3,6,8-tetrahydroxynaphthalene (1,3,6,8-THN or T4HN) by the polyketide synthase PfmaE though condensation of acetyl-CoA with malonyl-CoA. T4HN is not stable and easily oxidizes into the stable form flaviolin. T4HN is also substrate of the hydroxynaphthalene reductase PfmaG to yield scytalone. The scytalone dehydratase PfmaJ then reduces scytalone to 1,3,8-THN. 1,3,8-THN is then substrate of the hydroxynaphthalene reductase PfmaI to yield vermelone. Vermelone is further converted by the multicopper oxidase PfmaD to 1,8-DHN. Finally the laccase PFICI_06862 transforms 1,8-DHN to DHN-melanin. The roles of the 5-oxoprolinase PfmaA and the proline iminopeptidase PfmaB within the cluster have not been elucidated yet. In Pestalotiopsis fici (strain W106-1 / CGMCC3.15140), this protein is Laccase PFICI_06862.